The following is a 123-amino-acid chain: Ribonuclease P protein component (123 aa).

Belongs to the RnpA family. In terms of assembly, consists of a catalytic RNA component (M1 or rnpB) and a protein subunit.

The enzyme catalyses Endonucleolytic cleavage of RNA, removing 5'-extranucleotides from tRNA precursor.. In terms of biological role, RNaseP catalyzes the removal of the 5'-leader sequence from pre-tRNA to produce the mature 5'-terminus. It can also cleave other RNA substrates such as 4.5S RNA. The protein component plays an auxiliary but essential role in vivo by binding to the 5'-leader sequence and broadening the substrate specificity of the ribozyme. The protein is Ribonuclease P protein component of Streptomyces avermitilis (strain ATCC 31267 / DSM 46492 / JCM 5070 / NBRC 14893 / NCIMB 12804 / NRRL 8165 / MA-4680).